The following is a 318-amino-acid chain: Glycine--tRNA ligase alpha subunit (318 aa).

It belongs to the class-II aminoacyl-tRNA synthetase family. As to quaternary structure, tetramer of two alpha and two beta subunits.

It localises to the cytoplasm. The enzyme catalyses tRNA(Gly) + glycine + ATP = glycyl-tRNA(Gly) + AMP + diphosphate. This Moraxella catarrhalis (Branhamella catarrhalis) protein is Glycine--tRNA ligase alpha subunit (glyQ).